We begin with the raw amino-acid sequence, 357 residues long: 4-hydroxyphenylpyruvate dioxygenase (357 aa).

2 VOC domains span residues 17-137 (GFEF…LVDR) and 165-316 (YIDH…IFTD). Residues histidine 168, histidine 246, and glutamate 325 each coordinate Fe cation.

This sequence belongs to the 4HPPD family. In terms of assembly, homotetramer. Requires Fe cation as cofactor.

The catalysed reaction is 3-(4-hydroxyphenyl)pyruvate + O2 = homogentisate + CO2. The protein operates within amino-acid degradation; L-phenylalanine degradation; acetoacetate and fumarate from L-phenylalanine: step 3/6. The protein is 4-hydroxyphenylpyruvate dioxygenase (hpd) of Pseudomonas aeruginosa (strain ATCC 15692 / DSM 22644 / CIP 104116 / JCM 14847 / LMG 12228 / 1C / PRS 101 / PAO1).